The following is a 312-amino-acid chain: tRNA pseudouridine synthase B (312 aa).

Residue Asp-49 is the Nucleophile of the active site.

The protein belongs to the pseudouridine synthase TruB family. Type 1 subfamily.

It catalyses the reaction uridine(55) in tRNA = pseudouridine(55) in tRNA. Functionally, responsible for synthesis of pseudouridine from uracil-55 in the psi GC loop of transfer RNAs. This is tRNA pseudouridine synthase B from Chelativorans sp. (strain BNC1).